Consider the following 277-residue polypeptide: 4-hydroxy-3-methylbut-2-enyl diphosphate reductase (277 aa).

Residue C12 coordinates [4Fe-4S] cluster. (2E)-4-hydroxy-3-methylbut-2-enyl diphosphate is bound by residues H36 and H70. 2 residues coordinate dimethylallyl diphosphate: H36 and H70. The isopentenyl diphosphate site is built by H36 and H70. Residue C92 participates in [4Fe-4S] cluster binding. H120 provides a ligand contact to (2E)-4-hydroxy-3-methylbut-2-enyl diphosphate. H120 serves as a coordination point for dimethylallyl diphosphate. H120 serves as a coordination point for isopentenyl diphosphate. Catalysis depends on E122, which acts as the Proton donor. T158 lines the (2E)-4-hydroxy-3-methylbut-2-enyl diphosphate pocket. Residue C186 coordinates [4Fe-4S] cluster. The (2E)-4-hydroxy-3-methylbut-2-enyl diphosphate site is built by S214, N216, and S258. Dimethylallyl diphosphate-binding residues include S214, N216, and S258. Isopentenyl diphosphate contacts are provided by S214, N216, and S258.

The protein belongs to the IspH family. Requires [4Fe-4S] cluster as cofactor.

It catalyses the reaction isopentenyl diphosphate + 2 oxidized [2Fe-2S]-[ferredoxin] + H2O = (2E)-4-hydroxy-3-methylbut-2-enyl diphosphate + 2 reduced [2Fe-2S]-[ferredoxin] + 2 H(+). The catalysed reaction is dimethylallyl diphosphate + 2 oxidized [2Fe-2S]-[ferredoxin] + H2O = (2E)-4-hydroxy-3-methylbut-2-enyl diphosphate + 2 reduced [2Fe-2S]-[ferredoxin] + 2 H(+). It participates in isoprenoid biosynthesis; dimethylallyl diphosphate biosynthesis; dimethylallyl diphosphate from (2E)-4-hydroxy-3-methylbutenyl diphosphate: step 1/1. The protein operates within isoprenoid biosynthesis; isopentenyl diphosphate biosynthesis via DXP pathway; isopentenyl diphosphate from 1-deoxy-D-xylulose 5-phosphate: step 6/6. In terms of biological role, catalyzes the conversion of 1-hydroxy-2-methyl-2-(E)-butenyl 4-diphosphate (HMBPP) into a mixture of isopentenyl diphosphate (IPP) and dimethylallyl diphosphate (DMAPP). Acts in the terminal step of the DOXP/MEP pathway for isoprenoid precursor biosynthesis. The protein is 4-hydroxy-3-methylbut-2-enyl diphosphate reductase of Campylobacter jejuni subsp. jejuni serotype O:23/36 (strain 81-176).